We begin with the raw amino-acid sequence, 444 residues long: Proline--tRNA ligase (444 aa).

The protein belongs to the class-II aminoacyl-tRNA synthetase family. ProS type 2 subfamily. In terms of assembly, homodimer.

It is found in the cytoplasm. It catalyses the reaction tRNA(Pro) + L-proline + ATP = L-prolyl-tRNA(Pro) + AMP + diphosphate. In terms of biological role, catalyzes the attachment of proline to tRNA(Pro) in a two-step reaction: proline is first activated by ATP to form Pro-AMP and then transferred to the acceptor end of tRNA(Pro). The sequence is that of Proline--tRNA ligase from Pelagibacter ubique (strain HTCC1062).